The sequence spans 1363 residues: Collagen alpha-2(I) chain (1363 aa).

Residues 1-22 (MLSFVDTRILLLLAVTSYLATS) form the signal peptide. Position 23 is a pyrrolidone carboxylic acid (Q23). Residues 23 to 77 (QHLFQASAGRKGPRGDKGPQGERGPPGPPGRDGEDGPPGPPGPPGPPGLGGNFAA) constitute a propeptide, N-terminal propeptide. Residues 28–1110 (ASAGRKGPRG…GPNGGGYEVG (1083 aa)) form a disordered region. A compositionally biased stretch (pro residues) spans 59–69 (PPGPPGPPGPP). Position 78 is a pyrrolidone carboxylic acid (Q78). K83 is modified (allysine). The span at 88 to 97 (GPGPMGLMGP) shows a compositional bias: low complexity. A compositionally biased stretch (pro residues) spans 98-110 (RGPPGASGPPGPP). Residues 112-128 (FQGVPGEPGEPGQTGPQ) are compositionally biased toward low complexity. A compositionally biased stretch (basic and acidic residues) spans 140-154 (AGEDGHPGKPGRPGE). K176 is modified (5-hydroxylysine; alternate). An O-linked (Gal...) hydroxylysine; alternate glycan is attached at K176. Composition is skewed to low complexity over residues 224 to 263 (IGAP…PGAK) and 299 to 320 (PGAN…AGAP). The segment covering 322–335 (LPGPRGIPGPPGPA) has biased composition (pro residues). 2 positions are modified to 4-hydroxyproline: P440 and P443. Composition is skewed to low complexity over residues 601-610 (PAGPIGSRGP) and 674-683 (RGLPGAIGAP). A compositionally biased stretch (gly residues) spans 684–699 (GPAGGAGDRGEGGPAG). Residues 721 to 736 (PSGFAGPPGAAGQPGA) are compositionally biased toward low complexity. Residues 737–746 (KGERGPKGPK) are compositionally biased toward basic and acidic residues. 5 stretches are compositionally biased toward low complexity: residues 748–794 (ETGP…AGRV), 842–875 (AGEK…LGLP), 898–931 (VSGP…NPGN), 955–965 (PSGALGAPGPH), and 986–995 (VGPAGAFGPR). The span at 1004–1015 (RGEKGEPGDKGH) shows a compositional bias: basic and acidic residues. Low complexity predominate over residues 1036–1049 (QHGDQGPPGNNGPA). Composition is skewed to pro residues over residues 1051–1060 (PRGPPGPSGP) and 1088–1102 (AGPP…PPGP). Positions 1118-1363 (ADQPSLRPKD…GLHIGPVCFK (246 aa)) are cleaved as a propeptide — C-terminal propeptide. The Fibrillar collagen NC1 domain occupies 1128–1363 (YEVDATLKTL…GLHIGPVCFK (236 aa)). Cystine bridges form between C1158–C1190, C1198–C1361, and C1269–C1314. Ca(2+) is bound by residues D1176, N1178, Q1179, C1181, and D1184. The N-linked (GlcNAc...) asparagine glycan is linked to N1264.

Belongs to the fibrillar collagen family. As to quaternary structure, trimers of one alpha 2(I) and two alpha 1(I) chains. In terms of processing, prolines at the third position of the tripeptide repeating unit (G-X-Y) are hydroxylated in some or all of the chains. The N-terminus of the mature protein is blocked. As to expression, forms the fibrils of tendon, ligaments and bones. In bones the fibrils are mineralized with calcium hydroxyapatite.

The protein resides in the secreted. Its subcellular location is the extracellular space. It is found in the extracellular matrix. Functionally, type I collagen is a member of group I collagen (fibrillar forming collagen). This is Collagen alpha-2(I) chain (COL1A2) from Gallus gallus (Chicken).